An 89-amino-acid chain; its full sequence is Small ribosomal subunit protein uS15 (89 aa).

The protein belongs to the universal ribosomal protein uS15 family. As to quaternary structure, part of the 30S ribosomal subunit. Forms a bridge to the 50S subunit in the 70S ribosome, contacting the 23S rRNA.

One of the primary rRNA binding proteins, it binds directly to 16S rRNA where it helps nucleate assembly of the platform of the 30S subunit by binding and bridging several RNA helices of the 16S rRNA. Functionally, forms an intersubunit bridge (bridge B4) with the 23S rRNA of the 50S subunit in the ribosome. The chain is Small ribosomal subunit protein uS15 from Vibrio cholerae serotype O1 (strain ATCC 39541 / Classical Ogawa 395 / O395).